The primary structure comprises 2060 residues: Fatty acid synthase subunit beta (2060 aa).

Residues Met-1–Pro-32 form a disordered region. The segment covering Pro-18–Pro-32 has biased composition (low complexity). Residues Val-182–His-543 are acetyltransferase (AT) domain. Ser-301 serves as the catalytic For acetyltransferase activity. The tract at residues Thr-600–Asp-845 is enoyl reductase (ER) domain. Residues Asp-1157–Met-1640 form a dehydratase (DH) domain region. Residues Phe-1549–Ala-1661 enclose the MaoC-like domain. Residues Leu-1679–Ser-2043 are malonyl/palmitoyl transferase (MT/PT) domain. Ser-1824 acts as the For malonyltransferase activity in catalysis.

The protein belongs to the fungal fatty acid synthetase subunit beta family. As to quaternary structure, [Alpha(6)beta(6)] hexamers of two multifunctional subunits (alpha and beta).

It carries out the reaction acetyl-CoA + n malonyl-CoA + 2n NADPH + 4n H(+) = a long-chain-acyl-CoA + n CoA + n CO2 + 2n NADP(+).. The enzyme catalyses holo-[ACP] + acetyl-CoA = acetyl-[ACP] + CoA. It catalyses the reaction holo-[ACP] + malonyl-CoA = malonyl-[ACP] + CoA. The catalysed reaction is a (3R)-hydroxyacyl-[ACP] = a (2E)-enoyl-[ACP] + H2O. It carries out the reaction a 2,3-saturated acyl-[ACP] + NAD(+) = a (2E)-enoyl-[ACP] + NADH + H(+). The enzyme catalyses (9Z)-octadecenoyl-[ACP] + H2O = (9Z)-octadecenoate + holo-[ACP] + H(+). It functions in the pathway mycotoxin biosynthesis. Its function is as follows. Fatty acid synthase subunit beta; part of the gene cluster that mediates the biosynthesis of gramillins A and B, bicyclic lipopeptides that induce cell death in maize leaves but not in wheat leaves. The nonribosomal peptide synthetase GRA1 incorporates respectively a glutamic adic (Glu), a leucine (Leu), a serine (Ser), a hydroxyglutamine (HOGln), a 2-amino decanoic acid, and 2 cysteins (CysB and CysA). The biosynthesis of 2-amino decanoic acid incorporated in gramillins could be initiated by a fatty acid synthase composed of the alpha and beta subunits FGSG_00036 and FGSG_11656. The cytochrome P450 monooxygenase FGSG_15680 could hydroxylate the fatty acid chain. Subsequent oxidation to the ketone by the oxidoreductase FGSG_00048 and transamination by aminotransferase FGSG_00049 could form 2-amino-decanoic acid. On the other hand, FGSG_15680 could also be responsible for the HO-modified glutamine at the gamma-position. Whether hydroxylation occurs on the fully assembled product or on the Gln residue prior to assembly into the gramillins requires further proof. The thioredoxin FGSG_00043 could also be required for the disulfide-bond formation between CysA and CysB. The specific involvement of the remaining proteins from the cluster is more difficult to discern, but could have broader regulatory (FGSG_00040 and FGSG_11657) or enzymatic functions (FGSG_00044 and FGSG_00045). The final C-domain of GRA1 does not possess the expected sequence of a termination CT domain, often implicated in macrocyclization and release of a cyclopeptidein fungal NRPs; and the thioesterase FGSG_00047 may act in concert with the terminal C-domain of GRA1 to catalyze the formation of the macrocyclic anhydride and release of the products. This is Fatty acid synthase subunit beta from Gibberella zeae (strain ATCC MYA-4620 / CBS 123657 / FGSC 9075 / NRRL 31084 / PH-1) (Wheat head blight fungus).